A 1849-amino-acid chain; its full sequence is Brefeldin A-inhibited guanine nucleotide-exchange protein 1 (1849 aa).

Positions 2-224 (YEGKKTKNMF…QEAKQMEKER (223 aa)) are DCB; DCB:DCB domain and DCB:HUS domain interaction. Residues 46 to 58 (AETEKQSPPHGEA) show a composition bias toward basic and acidic residues. Disordered regions lie at residues 46 to 65 (AETE…SSTL), 216 to 248 (EAKQ…QLRY), 267 to 302 (LHTN…DQAT), and 378 to 413 (TPIS…SPGA). The residue at position 52 (serine 52) is a Phosphoserine. A compositionally biased stretch (basic and acidic residues) spans 267-277 (LHTNDVDKSLQ). 5 positions are modified to phosphoserine: serine 286, serine 289, serine 290, serine 397, and serine 410. The span at 394-409 (SVSSNDTQESGNSSGP) shows a compositional bias: polar residues. The segment at 557 to 577 (ADAQSVVDIYVNYDCDLNAAN) is HUS; DCB:HUS domain interaction. An SEC7 domain is found at 709 to 840 (FNKKPKRGIQ…IIMLTTDLHS (132 aa)). The short motif at 711–715 (KKPKR) is the Nuclear localization signal (NLS) element. Serine 1079 carries the post-translational modification Phosphoserine. A disordered region spans residues 1543–1562 (RPNSGETAPPPPSPVSEKPL). Residues serine 1566 and serine 1569 each carry the phosphoserine modification.

Homodimer. Interacts with ARFGEF2/BIG2; both proteins are probably part of the same or very similar macromolecular complexes. Interacts with FKBP2. Interacts with MYO9B. Interacts with PRKAR1A and PRKAR2A. Interacts with PPP1CC. Interacts with NCL, FBL, NUP62 and U3 small nucleolar RNA. Interacts with DPY30. Interacts with PDE3A. Interacts with KANK1. Interacts with TBC1D22A and TBC1D22B. Interacts (via N-terminus) with ARL1. Phosphorylated. In vitro phosphorylated by PKA reducing its GEF activity and dephosphorylated by phosphatase PP1. Expressed in placenta, lung, heart, brain, kidney and pancreas.

Its subcellular location is the cytoplasm. It localises to the perinuclear region. The protein localises to the golgi apparatus. It is found in the trans-Golgi network membrane. The protein resides in the nucleus. Its subcellular location is the nucleolus. It localises to the nucleus matrix. Its activity is regulated as follows. Inhibited by brefeldin A. Its function is as follows. Promotes guanine-nucleotide exchange on ARF1 and ARF3. Promotes the activation of ARF1/ARF3 through replacement of GDP with GTP. Involved in vesicular trafficking. Required for the maintenance of Golgi structure; the function may be independent of its GEF activity. Required for the maturation of integrin beta-1 in the Golgi. Involved in the establishment and persistence of cell polarity during directed cell movement in wound healing. Proposed to act as A kinase-anchoring protein (AKAP) and may mediate crosstalk between Arf and PKA pathways. Inhibits GAP activity of MYO9B probably through competitive RhoA binding. The function in the nucleus remains to be determined. This is Brefeldin A-inhibited guanine nucleotide-exchange protein 1 (ARFGEF1) from Homo sapiens (Human).